A 494-amino-acid polypeptide reads, in one-letter code: Amidophosphoribosyltransferase (494 aa).

Residues 1 to 10 constitute a propeptide that is removed on maturation; it reads MFNYSGLNEE. The active-site Nucleophile is Cys11. One can recognise a Glutamine amidotransferase type-2 domain in the interval 11 to 231; it reads CGVFGIWNHP…AGEYVVINDK (221 aa). The Mg(2+) site is built by Ser294, Asp356, and Asp357.

The protein in the C-terminal section; belongs to the purine/pyrimidine phosphoribosyltransferase family. Requires Mg(2+) as cofactor.

The catalysed reaction is 5-phospho-beta-D-ribosylamine + L-glutamate + diphosphate = 5-phospho-alpha-D-ribose 1-diphosphate + L-glutamine + H2O. The protein operates within purine metabolism; IMP biosynthesis via de novo pathway; N(1)-(5-phospho-D-ribosyl)glycinamide from 5-phospho-alpha-D-ribose 1-diphosphate: step 1/2. Catalyzes the formation of phosphoribosylamine from phosphoribosylpyrophosphate (PRPP) and glutamine. This chain is Amidophosphoribosyltransferase, found in Staphylococcus aureus (strain COL).